Reading from the N-terminus, the 3916-residue chain is Fusarin C synthetase (3916 aa).

The Ketosynthase family 3 (KS3) domain occupies K9–Q440. Catalysis depends on for beta-ketoacyl synthase activity residues C182, H319, and H360. The segment at V548 to D866 is malonyl-CoA:ACP transacylase (MAT) domain. The segment at H935–S1068 is N-terminal hotdog fold. The segment at H935 to P1228 is dehydratase (DH) domain. One can recognise a PKS/mFAS DH domain in the interval H935–S1231. The active-site Proton acceptor; for dehydratase activity is H967. Positions L1084–S1231 are C-terminal hotdog fold. The Proton donor; for dehydratase activity role is filled by D1141. Residues I1347–Y1575 form a C-methyltransferase (CMeT) domain region. The segment at T2092–V2266 is ketoreductase (KR) domain 1. Positions E2372 to L2449 constitute a Carrier 1 domain. S2409 is modified (O-(pantetheine 4'-phosphoryl)serine). The tract at residues N2487–D2510 is disordered. The span at I2492–S2503 shows a compositional bias: polar residues. Residues P2522–I2806 form a condensation region. The segment at E2975–L3385 is adenylation. The 78-residue stretch at K3493–T3570 folds into the Carrier 2 domain. An O-(pantetheine 4'-phosphoryl)serine modification is found at S3530. Residues L3612 to A3833 are thiolester reductase (R) domain.

The protein in the C-terminal section; belongs to the NRP synthetase family.

The protein operates within mycotoxin biosynthesis. In terms of biological role, fusarin C synthetase; part of the gene cluster that mediates the biosynthesis of the mycotoxin fusarin C. Within the cluster, FUS1, FUS2, FUS8 and FUS9 are sufficient for fusarin production. The roles of the other FUS members are yet undetermined. The fusarin C synthetase FUS1 is responsible for the condensation of one acetyl-coenzyme A (CoA) unit with six malonyl-CoA units and the amide linkage of the arising heptaketide and homoserine, subsequently releasing the first intermediate, prefusarin, as an alcohol with an open ring structure. The cytochrome P450 monooxygenase FUS8 participates in multiple oxidation processes at carbon C-20 and is able to use the FUS1 product as substrate, resulting in formation of 20-hydroxy-prefusarin. This reaction seems to be essential before the 2-pyrrolidone ring closure can be catalyzed by FUS2, generating 20-hydroxy-fusarin. FUS8 is able to further oxidizes carbon C-20 after ring closure, resulting in the formation of carboxy-fusarin C. As the last step, FUS9 methylates the hydroxyl group at C-21 to generate fusarin C. Fusarin C can then rearrange to epi-fusarin C, the (z)-isomers, and fusarin A and fusarin D. This chain is Fusarin C synthetase, found in Gibberella fujikuroi (strain CBS 195.34 / IMI 58289 / NRRL A-6831) (Bakanae and foot rot disease fungus).